The following is an 85-amino-acid chain: MKVTLIAILTCAAVLVLHTTAAEELEAESQLMKVGMPDTELAAVDEERLFECSVSCEIEKEGNKDCKKKKCKGGWKCKFNMCVKV.

Residues 1–22 form the signal peptide; sequence MKVTLIAILTCAAVLVLHTTAA. The propeptide occupies 23-48; it reads EELEAESQLMKVGMPDTELAAVDEER. Disulfide bonds link cysteine 52/cysteine 66, cysteine 56/cysteine 77, and cysteine 71/cysteine 82.

The protein belongs to the neurotoxin 12 (Hwtx-2) family. 02 (Hwtx-2) subfamily. Monomer. In terms of tissue distribution, expressed by the venom gland.

It is found in the secreted. Functionally, neurotoxin active on both insects and mammals. In Cyriopagopus hainanus (Chinese bird spider), this protein is U4-theraphotoxin-Hhn1a.